A 580-amino-acid chain; its full sequence is PX domain-containing protein kinase-like protein (580 aa).

The region spanning 14 to 126 (LDDTVPLTAA…KFLDPNNYSA (113 aa)) is the PX domain. Residues 88–481 (FIAERQKGLQ…VENSEEQPVK (394 aa)) form the Protein kinase domain. The disordered stretch occupies residues 433-551 (EQKQIHQHRR…LPQAVNGVNR (119 aa)). Basic residues-rich tracts occupy residues 437-448 (IHQHRRLTRAQS) and 457-469 (KRRKILARKKSKR). Over residues 483–514 (SNANNSAGSGASSPLTSPSSPTPPSTAGLSSA) the composition is skewed to low complexity. Residues 515 to 531 (LPPPPPPPPPPPPPAGP) are compositionally biased toward pro residues. One can recognise a WH2 domain in the interval 549-568 (VNRGALLSSIQNFQKGTLRK).

This sequence belongs to the protein kinase superfamily.

The protein resides in the cytoplasm. Its subcellular location is the cell membrane. Its function is as follows. Binds to and modulates brain Na,K-ATPase subunits ATP1B1 and ATP1B3 and may thereby participate in the regulation of electrical excitability and synaptic transmission. May not display kinase activity. The protein is PX domain-containing protein kinase-like protein of Rattus norvegicus (Rat).